The following is a 95-amino-acid chain: Protein E7 (95 aa).

The segment at 1–41 (MHGNVATIEDIVLDLKPEPFDLYCREQLEDSDAEDETAVTQ) is E7 terminal domain. Residues 22-26 (LYCRE) carry the LXCXE motif; interaction with host RB1 and TMEM173/STING motif. The segment at 53–91 (CGGVCCKTVRLCVYSTHTGIRVLQELLHQDALQIVCPTC) is a zinc-finger region. Positions 72-80 (IRVLQELLH) match the Nuclear export signal motif.

The protein belongs to the papillomaviridae E7 protein family. In terms of assembly, homodimer. Homooligomer. Interacts with host RB1; this interaction induces dissociation of RB1-E2F1 complex thereby disrupting RB1 activity. Interacts with host EP300; this interaction represses EP300 transcriptional activity. Interacts with protein E2; this interaction inhibits E7 oncogenic activity. Interacts with host TMEM173/STING; this interaction impairs the ability of TMEM173/STING to sense cytosolic DNA and promote the production of type I interferon (IFN-alpha and IFN-beta). In terms of processing, highly phosphorylated.

The protein resides in the host cytoplasm. The protein localises to the host nucleus. Plays a role in viral genome replication by driving entry of quiescent cells into the cell cycle. Stimulation of progression from G1 to S phase allows the virus to efficiently use the cellular DNA replicating machinery to achieve viral genome replication. E7 protein has both transforming and trans-activating activities. Induces the disassembly of the E2F1 transcription factor from RB1, with subsequent transcriptional activation of E2F1-regulated S-phase genes. Interferes with host histone deacetylation mediated by HDAC1 and HDAC2, leading to transcription activation. Also plays a role in the inhibition of both antiviral and antiproliferative functions of host interferon alpha. Interaction with host TMEM173/STING impairs the ability of TMEM173/STING to sense cytosolic DNA and promote the production of type I interferon (IFN-alpha and IFN-beta). The chain is Protein E7 from Human papillomavirus type 54.